The following is a 506-amino-acid chain: Cytochrome P450 71B8 (506 aa).

A helical transmembrane segment spans residues 5–25 (ILLCFFFLFPLLLTLFKKLLP). Cysteine 443 contacts heme.

It belongs to the cytochrome P450 family. Heme is required as a cofactor.

It localises to the membrane. The sequence is that of Cytochrome P450 71B8 (CYP71B8) from Arabidopsis thaliana (Mouse-ear cress).